A 287-amino-acid polypeptide reads, in one-letter code: Survival motor neuron protein (287 aa).

The interval Met-1 to Asp-27 is disordered. A P1 (binding site for GEMIN2) region spans residues Pro-8–Asp-39. Thr-20 is modified (phosphothreonine). Ser-23 and Ser-26 each carry phosphoserine. A Glycyl lysine isopeptide (Lys-Gly) (interchain with G-Cter in SUMO2) cross-link involves residue Lys-46. Residues Gly-52–Ala-83 are disordered. Over residues Ser-63–Lys-77 the composition is skewed to basic residues. Thr-64 is subject to Phosphothreonine. One can recognise a Tudor domain in the interval Gln-86–Asn-146. The segment at Lys-92 to Lys-205 is required for interaction with RPP20/POP7. A disordered region spans residues Glu-148–Pro-216. The span at Glu-157–Lys-180 shows a compositional bias: polar residues. Lys-205 is covalently cross-linked (Glycyl lysine isopeptide (Lys-Gly) (interchain with G-Cter in SUMO2)). Residues Pro-234–Trp-261 are P2 (binding site for SM B). A required for interaction with SYNCRIP region spans residues Gly-273–Asn-287.

This sequence belongs to the SMN family. As to quaternary structure, homooligomer; may form higher order homooligomers in the dimer to octamer range. Part of the core SMN complex that contains SMN1, GEMIN2/SIP1, DDX20/GEMIN3, GEMIN4, GEMIN5, GEMIN6, GEMIN7, GEMIN8 and STRAP/UNRIP. Part of the SMN-Sm complex that contains SMN1, GEMIN2/SIP1, DDX20/GEMIN3, GEMIN4, GEMIN5, GEMIN6, GEMIN7, GEMIN8, STRAP/UNRIP and the Sm proteins SNRPB, SNRPD1, SNRPD2, SNRPD3, SNRPE, SNRPF and SNRPG. Component of an import snRNP complex composed of KPNB1, RNUT1, SMN1 and ZNF259. Interacts with DDX20, FBL, NOLA1, RNUT1, SYNCRIP and with several spliceosomal snRNP core Sm proteins, including SNRPB, SNRPD1, SNRPD2, SNRPD3, SNRPE and ILF3. Interacts with GEMIN2; the interaction is direct. Interacts with GEMIN3; the interaction is direct. Interacts with GEMIN8; the interaction is direct. Interacts with SNRPB; the interaction is direct. Interacts (via Tudor domain) with SNRPD1 (via C-terminus); the interaction is direct. Interacts with SNRPD2; the interaction is direct. Interacts (via Tudor domain) with SNRPD3 (via C-terminus); the interaction is direct. Interacts with SNRPE; the interaction is direct. Interacts with OSTF1, LSM10, LSM11 and RPP20/POP7. Interacts (via C-terminal region) with ZPR1 (via C-terminal region). Interacts (via Tudor domain) with COIL. Interacts with SETX; recruits SETX to POLR2A. Interacts with POLR2A (via the C-terminal domain (CTD)). Interacts with PRMT5. Interacts with XRN2. Interacts (via C-terminus) with FMR1 (via C-terminus); the interaction is direct and occurs in a RNA-independent manner. Interacts (via Tudor domain) with SF3B2 ('Arg-508'-methylated form). Interacts with WRAP53/TCAB1. Interacts (via Tudor domain) with ELAVL4 in an RNA-independent manner; the interaction is required for localization of ELAVL4 to RNA granules. Interacts with FRG1.

Its subcellular location is the nucleus. It localises to the gem. The protein localises to the cajal body. The protein resides in the cytoplasm. It is found in the cytoplasmic granule. Its subcellular location is the perikaryon. It localises to the cell projection. The protein localises to the neuron projection. The protein resides in the axon. It is found in the myofibril. Its subcellular location is the sarcomere. It localises to the z line. Functionally, the SMN complex catalyzes the assembly of small nuclear ribonucleoproteins (snRNPs), the building blocks of the spliceosome, and thereby plays an important role in the splicing of cellular pre-mRNAs. Most spliceosomal snRNPs contain a common set of Sm proteins SNRPB, SNRPD1, SNRPD2, SNRPD3, SNRPE, SNRPF and SNRPG that assemble in a heptameric protein ring on the Sm site of the small nuclear RNA to form the core snRNP (Sm core). In the cytosol, the Sm proteins SNRPD1, SNRPD2, SNRPE, SNRPF and SNRPG are trapped in an inactive 6S pICln-Sm complex by the chaperone CLNS1A that controls the assembly of the core snRNP. To assemble core snRNPs, the SMN complex accepts the trapped 5Sm proteins from CLNS1A forming an intermediate. Binding of snRNA inside 5Sm ultimately triggers eviction of the SMN complex, thereby allowing binding of SNRPD3 and SNRPB to complete assembly of the core snRNP. Within the SMN complex, SMN1 acts as a structural backbone and together with GEMIN2 it gathers the Sm complex subunits. Ensures the correct splicing of U12 intron-containing genes that may be important for normal motor and proprioceptive neurons development. Also required for resolving RNA-DNA hybrids created by RNA polymerase II, that form R-loop in transcription terminal regions, an important step in proper transcription termination. May also play a role in the metabolism of small nucleolar ribonucleoprotein (snoRNPs). In Canis lupus familiaris (Dog), this protein is Survival motor neuron protein (SMN1).